The sequence spans 390 residues: Cold-responsive protein kinase 1 (390 aa).

One can recognise a Protein kinase domain in the interval 41-320; it reads FSAENKIGEG…VRLLTGEKDI (280 aa). Residues 47–55 and K69 contribute to the ATP site; that span reads IGEGGFGSV. Phosphotyrosine is present on Y114. Residue D169 is the Proton acceptor of the active site. A phosphoserine mark is found at S173 and S202. Phosphothreonine is present on residues T203 and T208. Y216 bears the Phosphotyrosine mark. Residues 345–390 form a disordered region; the sequence is TKTEQVNRQNYTNPSSSSNGSSRDHSNAYSSGASSANAGNTFSSTI. A compositionally biased stretch (low complexity) spans 354–390; the sequence is NYTNPSSSSNGSSRDHSNAYSSGASSANAGNTFSSTI.

Belongs to the protein kinase superfamily. Ser/Thr protein kinase family. Interacts with and phosphorylates 14-3-3 proteins. Binds to GRF6 at the plasma membrane. Post-translationally, autophosphorylated.

Its subcellular location is the cell membrane. It carries out the reaction L-seryl-[protein] + ATP = O-phospho-L-seryl-[protein] + ADP + H(+). The catalysed reaction is L-threonyl-[protein] + ATP = O-phospho-L-threonyl-[protein] + ADP + H(+). With respect to regulation, activated by cold. Negative regulator of freezing tolerance that phosphorylates 14-3-3 proteins (e.g. GRF6) thus triggering their translocation from the cytosol to the nucleus in response to cold stress. The polypeptide is Cold-responsive protein kinase 1 (Arabidopsis thaliana (Mouse-ear cress)).